The chain runs to 721 residues: Homeobox-leucine zipper protein HDG2 (721 aa).

A disordered region spans residues 17-70 (NNHNYNHEDNNNEGFLRDDEFDSPNTKSGSENQEGGSGNDQDPLHPNKKKRYHR). Residues 21-34 (YNHEDNNNEGFLRD) are compositionally biased toward basic and acidic residues. Positions 64 to 123 (KKKRYHRHTQLQIQEMEAFFKECPHPDDKQRKQLSRELNLEPLQVKFWFQNKRTQMKNHH) form a DNA-binding region, homeobox. A coiled-coil region spans residues 120–194 (KNHHERHENS…DRISAIAAKY (75 aa)). In terms of domain architecture, START spans 242 to 468 (TESDKPVIID…LDRQCERLAS (227 aa)).

It belongs to the HD-ZIP homeobox family. Class IV subfamily. Interacts with AIL7/PLT7, ANT, BBM and AIL1. Expressed in hairless cell files of the hypocotyl epidermis. Expressed in shoot apical meristem (SAM) with higher levels in L1 cells and the epidermal layer of young leaves. Expressed in primary root tips, in the L1 of apical inflorescence meristems, early flower primordia, carpel epidermis, ovule primordia, nucellus, chalaze and seed coat.

It is found in the nucleus. Functionally, probable transcription factor. Involved, together with PDF2, in the regulation of flower organs development by promoting the expression of APETALA 3 (AP3) in the epidermis and internal cell layers of developing flowers. The chain is Homeobox-leucine zipper protein HDG2 from Arabidopsis thaliana (Mouse-ear cress).